Here is a 461-residue protein sequence, read N- to C-terminus: Alpha-tubulin N-acetyltransferase 1 (461 aa).

Positions 2-189 constitute an N-acetyltransferase domain; the sequence is VEFRFDIKPL…NNFVLYEGFF (188 aa). Residues 123–136 and 159–168 contribute to the acetyl-CoA site; these read FYVH…GLGK and SEKLLSFLSK. 3 disordered regions span residues 196 to 295, 314 to 362, and 418 to 443; these read NGGG…GNHD, NSYE…PEVA, and RPPG…SGGG. Polar residues predominate over residues 233–254; that stretch reads RRGSQQQTTPNARLQQITQISP. The segment covering 283-293 has biased composition (low complexity); that stretch reads GSAEANSGNGN. A compositionally biased stretch (acidic residues) spans 318 to 336; that stretch reads PEPEVEPEPEPEPEPEPEP. Residues 339–356 show a composition bias toward pro residues; the sequence is ITPPSPPPKSHTPTPPSV. Over residues 426–439 the composition is skewed to polar residues; the sequence is SPGQDNTDAMSTVS.

This sequence belongs to the acetyltransferase ATAT1 family.

The enzyme catalyses L-lysyl-[alpha-tubulin] + acetyl-CoA = N(6)-acetyl-L-lysyl-[alpha-tubulin] + CoA + H(+). Its function is as follows. Specifically acetylates 'Lys-40' in alpha-tubulin on the lumenal side of microtubules. Promotes microtubule destabilization and accelerates microtubule dynamics; this activity may be independent of acetylation activity. Acetylates alpha-tubulin with a slow enzymatic rate, due to a catalytic site that is not optimized for acetyl transfer. Enters the microtubule through each end and diffuses quickly throughout the lumen of microtubules. Acetylates only long/old microtubules because of its slow acetylation rate since it does not have time to act on dynamically unstable microtubules before the enzyme is released. Acetylates central spindle microtubules. In Drosophila melanogaster (Fruit fly), this protein is Alpha-tubulin N-acetyltransferase 1.